Here is a 342-residue protein sequence, read N- to C-terminus: N-acetyl-gamma-glutamyl-phosphate reductase (342 aa).

Cysteine 147 is a catalytic residue.

Belongs to the NAGSA dehydrogenase family. Type 1 subfamily.

The protein localises to the cytoplasm. The enzyme catalyses N-acetyl-L-glutamate 5-semialdehyde + phosphate + NADP(+) = N-acetyl-L-glutamyl 5-phosphate + NADPH + H(+). Its pathway is amino-acid biosynthesis; L-arginine biosynthesis; N(2)-acetyl-L-ornithine from L-glutamate: step 3/4. In terms of biological role, catalyzes the NADPH-dependent reduction of N-acetyl-5-glutamyl phosphate to yield N-acetyl-L-glutamate 5-semialdehyde. The protein is N-acetyl-gamma-glutamyl-phosphate reductase of Campylobacter jejuni (strain RM1221).